The sequence spans 262 residues: Global transcriptional regulator CodY (262 aa).

The interval 1 to 159 (MATLLEKTRK…ATTVIGVQLS (159 aa)) is GAF domain. A DNA-binding region (H-T-H motif) is located at residues 207–226 (ASVIADKIGITRSVIVNALR).

The protein belongs to the CodY family.

It is found in the cytoplasm. Functionally, DNA-binding global transcriptional regulator which is involved in the adaptive response to starvation and acts by directly or indirectly controlling the expression of numerous genes in response to nutrient availability. During rapid exponential growth, CodY is highly active and represses genes whose products allow adaptation to nutrient depletion. The polypeptide is Global transcriptional regulator CodY (Lactococcus lactis subsp. lactis (strain IL1403) (Streptococcus lactis)).